Reading from the N-terminus, the 177-residue chain is Large ribosomal subunit protein uL10 (177 aa).

It belongs to the universal ribosomal protein uL10 family. As to quaternary structure, part of the ribosomal stalk of the 50S ribosomal subunit. The N-terminus interacts with L11 and the large rRNA to form the base of the stalk. The C-terminus forms an elongated spine to which L12 dimers bind in a sequential fashion forming a multimeric L10(L12)X complex.

Functionally, forms part of the ribosomal stalk, playing a central role in the interaction of the ribosome with GTP-bound translation factors. This Leptospira biflexa serovar Patoc (strain Patoc 1 / Ames) protein is Large ribosomal subunit protein uL10.